The primary structure comprises 67 residues: Large ribosomal subunit protein uL29 (67 aa).

Belongs to the universal ribosomal protein uL29 family.

This Halorhodospira halophila (strain DSM 244 / SL1) (Ectothiorhodospira halophila (strain DSM 244 / SL1)) protein is Large ribosomal subunit protein uL29.